The following is a 530-amino-acid chain: SHPLWFPNTLAPSWLNGEYYGDRGFDPAGLAADPDTFERMRIAEVYHGRLAMLAVVGALVPDYLGKGIWYEAAQNAGIGLKEVAIFTAAYGVFEVARGVKENSDPTTIYPGFDPLNLTTDYTKEAEIKNGRLALTALLGFEVQRHVVGGSPLANLAEHLQQPLQRNIADSIMHQWPVAMFASSGHKDGLWFPNAEPPALLTGEYPADRGFDPLNLAADPDVYARMRVAEVFHGRLAMLCTVGCIVPELLGKGAWFEAGDSVDGLKLGFITMAIAAPTEYWRGQGGFNWQKGELDRSYPGFDPLNLTTDYTRAAEVKNGRLALTAVAGLTAQYLATGESPLANLSAHLANPIGANITTNLAMFASSGAKEERELWFPNIVPPRYLTGEAYGDKGFDPAGLAADPVTFERMQVAEVFHCRLSMLALVGCLVPELLGNGAWFQIWDKVDFNRFAVVALQVVAPLEYWRGNGGFLWNDEETVDQSYPGFDPLNLTTEYTKEAEIKNGRLAMNGMFGLEVQSHVTGKSPINNLID.

The protein localises to the plastid. It localises to the chloroplast. The chain is Light-harvesting complex I LH38 proteins from Euglena gracilis.